Reading from the N-terminus, the 32-residue chain is Photosystem II reaction center protein T (32 aa).

The helical transmembrane segment at 3-23 threads the bilayer; it reads ALVYTFLLIGTLIVIFFAVFF.

It belongs to the PsbT family. PSII is composed of 1 copy each of membrane proteins PsbA, PsbB, PsbC, PsbD, PsbE, PsbF, PsbH, PsbI, PsbJ, PsbK, PsbL, PsbM, PsbT, PsbX, PsbY, PsbZ, Psb30/Ycf12, at least 3 peripheral proteins of the oxygen-evolving complex and a large number of cofactors. It forms dimeric complexes.

It localises to the plastid. The protein resides in the chloroplast thylakoid membrane. Found at the monomer-monomer interface of the photosystem II (PS II) dimer, plays a role in assembly and dimerization of PSII. PSII is a light-driven water plastoquinone oxidoreductase, using light energy to abstract electrons from H(2)O, generating a proton gradient subsequently used for ATP formation. In Phaeodactylum tricornutum (strain CCAP 1055/1), this protein is Photosystem II reaction center protein T.